The chain runs to 116 residues: Ribosome-binding factor A (116 aa).

This sequence belongs to the RbfA family. As to quaternary structure, monomer. Binds 30S ribosomal subunits, but not 50S ribosomal subunits or 70S ribosomes.

Its subcellular location is the cytoplasm. In terms of biological role, one of several proteins that assist in the late maturation steps of the functional core of the 30S ribosomal subunit. Associates with free 30S ribosomal subunits (but not with 30S subunits that are part of 70S ribosomes or polysomes). Required for efficient processing of 16S rRNA. May interact with the 5'-terminal helix region of 16S rRNA. The polypeptide is Ribosome-binding factor A (Mycoplasma pneumoniae (strain ATCC 29342 / M129 / Subtype 1) (Mycoplasmoides pneumoniae)).